A 275-amino-acid chain; its full sequence is Dermonecrotic toxin SpeSicTox-betaIIA2v (275 aa).

Residue His5 is part of the active site. Residues Glu25 and Asp27 each coordinate Mg(2+). The active-site Nucleophile is His41. 2 cysteine pairs are disulfide-bonded: Cys45-Cys51 and Cys47-Cys190. Position 85 (Asp85) interacts with Mg(2+).

This sequence belongs to the arthropod phospholipase D family. Class II subfamily. The cofactor is Mg(2+). Expressed by the venom gland.

It localises to the secreted. It catalyses the reaction an N-(acyl)-sphingosylphosphocholine = an N-(acyl)-sphingosyl-1,3-cyclic phosphate + choline. The catalysed reaction is an N-(acyl)-sphingosylphosphoethanolamine = an N-(acyl)-sphingosyl-1,3-cyclic phosphate + ethanolamine. It carries out the reaction a 1-acyl-sn-glycero-3-phosphocholine = a 1-acyl-sn-glycero-2,3-cyclic phosphate + choline. The enzyme catalyses a 1-acyl-sn-glycero-3-phosphoethanolamine = a 1-acyl-sn-glycero-2,3-cyclic phosphate + ethanolamine. Dermonecrotic toxins cleave the phosphodiester linkage between the phosphate and headgroup of certain phospholipids (sphingolipid and lysolipid substrates), forming an alcohol (often choline) and a cyclic phosphate. This toxin acts on sphingomyelin (SM). It may also act on ceramide phosphoethanolamine (CPE), lysophosphatidylcholine (LPC) and lysophosphatidylethanolamine (LPE), but not on lysophosphatidylserine (LPS), and lysophosphatidylglycerol (LPG). It acts by transphosphatidylation, releasing exclusively cyclic phosphate products as second products. Induces dermonecrosis, hemolysis, increased vascular permeability, edema, inflammatory response, and platelet aggregation. This is Dermonecrotic toxin SpeSicTox-betaIIA2v from Sicarius peruensis (Six-eyed sand spider).